Here is a 536-residue protein sequence, read N- to C-terminus: GMP synthase [glutamine-hydrolyzing] (536 aa).

The Glutamine amidotransferase type-1 domain occupies 19 to 212; it reads RILILDFGSQ…VHEICDCAGS (194 aa). Catalysis depends on Cys-96, which acts as the Nucleophile. Catalysis depends on residues His-186 and Glu-188. One can recognise a GMPS ATP-PPase domain in the interval 213–411; that stretch reads WTPDNIIDMR…LGLPAKMINR (199 aa). 240-246 serves as a coordination point for ATP; the sequence is SGGVDSS.

As to quaternary structure, homodimer.

It carries out the reaction XMP + L-glutamine + ATP + H2O = GMP + L-glutamate + AMP + diphosphate + 2 H(+). It functions in the pathway purine metabolism; GMP biosynthesis; GMP from XMP (L-Gln route): step 1/1. In terms of biological role, catalyzes the synthesis of GMP from XMP. This is GMP synthase [glutamine-hydrolyzing] from Psychrobacter arcticus (strain DSM 17307 / VKM B-2377 / 273-4).